The primary structure comprises 502 residues: Nostrin (502 aa).

In terms of domain architecture, F-BAR spans 1 to 260 (MRDPLTDCSY…AISKVDVEKD (260 aa)). Residue Ser-114 is modified to Phosphoserine. Coiled-coil stretches lie at residues 160-230 (SMTQ…LNQY) and 305-335 (KLWR…SSAS). The REM-1 domain occupies 292 to 372 (PMDKERRKSL…SYKLSTVLAD (81 aa)). A disordered region spans residues 413-437 (KAESKAPAGEQNNPSSSRPGSSVSQ). Residues 423 to 437 (QNNPSSSRPGSSVSQ) show a composition bias toward low complexity. One can recognise an SH3 domain in the interval 438-497 (GNNQLCKALYTFQARQDDELNLEKGDIVTIHEKKEEGWWFGSLNGKKGHFPAAYVEELPP). Position 479 is a phosphoserine (Ser-479).

In terms of assembly, homotrimer. Interacts with DAB2. Interacts with NOS3, WASL and CAV1. Interacts (via SH3 domain) with DNM2; this interaction allows the recruitment of NOS3 to dynamin-positive structures. In terms of tissue distribution, over-expressed in brain microcapillaries from spontaneously hypertensive rats.

The protein resides in the cell membrane. It is found in the cytoplasmic vesicle. It localises to the cytoplasm. Its subcellular location is the cytoskeleton. The protein localises to the nucleus. Functionally, multivalent adapter protein which may decrease NOS3 activity by inducing its translocation away from the plasma membrane. The sequence is that of Nostrin from Rattus norvegicus (Rat).